The chain runs to 419 residues: UPF0229 protein TERTU_3150 (419 aa).

A disordered region spans residues 63–111; the sequence is IFHHGSGGKNNRVLPGNDRFNGGDHIERPEQGQGGGGNGSGASDSGEGE. Over residues 83-92 the composition is skewed to basic and acidic residues; sequence NGGDHIERPE.

The protein belongs to the UPF0229 family.

The chain is UPF0229 protein TERTU_3150 from Teredinibacter turnerae (strain ATCC 39867 / T7901).